A 101-amino-acid polypeptide reads, in one-letter code: Anti-sigma factor RshA (101 aa).

Residues 1-20 (MSETEREDERWTPPIGPIDP) form a disordered region. 4 residues coordinate iron-sulfur cluster: Cys25, His51, Cys55, and Cys58. At Thr96 the chain carries Phosphothreonine.

Belongs to the zinc-associated anti-sigma factor (ZAS) superfamily. Interacts with cognate ECF RNA polymerase sigma factor SigH under reducing conditions; the complex is disrupted under oxiding conditions or as temperatures rise. Binding inhibits the interaction of SigH with the RNA polymerase catalytic core. The cofactor is iron-sulfur cluster. In terms of processing, phosphorylated, probably by PknB. Phosphorylation decreases interaction with SigH, probably leading to increased SigH-mediated transcription.

Its function is as follows. A redox-regulated anti-sigma factor for cognate extracytoplasmic function (ECF) sigma factor SigH. ECF sigma factors are held in an inactive form by an anti-sigma factor. Overexpression leads to increased susceptibility to diamide. This is Anti-sigma factor RshA (rshA) from Mycolicibacterium smegmatis (strain ATCC 700084 / mc(2)155) (Mycobacterium smegmatis).